Here is a 333-residue protein sequence, read N- to C-terminus: 4-hydroxyproline epimerase (333 aa).

The Proton acceptor role is filled by Cys90. Substrate contacts are provided by residues 91 to 92 (GH) and Asp249. Cys253 functions as the Proton donor in the catalytic mechanism. Residue 254-255 (GT) participates in substrate binding.

The protein belongs to the proline racemase family. In terms of assembly, homodimer.

It catalyses the reaction trans-4-hydroxy-L-proline = cis-4-hydroxy-D-proline. Allows intracellular utilization of 4-hydroxyproline, one of the major constituents of host collagen, by converting 4-hydroxy-L-proline to 4-hydroxy-D-proline, which can be further metabolized by intracellular 4-hydroxy-D-proline oxidases. Strong B-cell mitogen. Plays an important role in the regulation of intra- and extracellular amino acid pools, allowing the bacterium to profit from host precursors and enzymatic pathways. The sequence is that of 4-hydroxyproline epimerase from Brucella canis (strain ATCC 23365 / NCTC 10854 / RM-666).